Consider the following 172-residue polypeptide: Large ribosomal subunit protein uL10 (172 aa).

It belongs to the universal ribosomal protein uL10 family. Part of the ribosomal stalk of the 50S ribosomal subunit. The N-terminus interacts with L11 and the large rRNA to form the base of the stalk. The C-terminus forms an elongated spine to which L12 dimers bind in a sequential fashion forming a multimeric L10(L12)X complex.

In terms of biological role, forms part of the ribosomal stalk, playing a central role in the interaction of the ribosome with GTP-bound translation factors. The chain is Large ribosomal subunit protein uL10 from Bartonella henselae (strain ATCC 49882 / DSM 28221 / CCUG 30454 / Houston 1) (Rochalimaea henselae).